Consider the following 340-residue polypeptide: tRNA N6-adenosine threonylcarbamoyltransferase (340 aa).

Fe cation is bound by residues His-111 and His-115. Substrate contacts are provided by residues 134 to 138, Asp-167, Gly-180, and Asn-272; that span reads LVSGG. Asp-300 contacts Fe cation.

The protein belongs to the KAE1 / TsaD family. Fe(2+) serves as cofactor.

Its subcellular location is the cytoplasm. It carries out the reaction L-threonylcarbamoyladenylate + adenosine(37) in tRNA = N(6)-L-threonylcarbamoyladenosine(37) in tRNA + AMP + H(+). In terms of biological role, required for the formation of a threonylcarbamoyl group on adenosine at position 37 (t(6)A37) in tRNAs that read codons beginning with adenine. Is involved in the transfer of the threonylcarbamoyl moiety of threonylcarbamoyl-AMP (TC-AMP) to the N6 group of A37, together with TsaE and TsaB. TsaD likely plays a direct catalytic role in this reaction. This is tRNA N6-adenosine threonylcarbamoyltransferase from Proteus mirabilis (strain HI4320).